We begin with the raw amino-acid sequence, 437 residues long: GTPase Obg (437 aa).

One can recognise an Obg domain in the interval S2–L160. A disordered region spans residues G127–E146. An OBG-type G domain is found at A161 to D338. GTP is bound by residues G167–S174, F192–V196, D214–G217, N284–D287, and S319–L321. The Mg(2+) site is built by S174 and T194. An OCT domain is found at G359–D437.

The protein belongs to the TRAFAC class OBG-HflX-like GTPase superfamily. OBG GTPase family. Monomer. Requires Mg(2+) as cofactor.

The protein resides in the cytoplasm. In terms of biological role, an essential GTPase which binds GTP, GDP and possibly (p)ppGpp with moderate affinity, with high nucleotide exchange rates and a fairly low GTP hydrolysis rate. Plays a role in control of the cell cycle, stress response, ribosome biogenesis and in those bacteria that undergo differentiation, in morphogenesis control. The protein is GTPase Obg of Streptococcus thermophilus (strain ATCC BAA-491 / LMD-9).